A 689-amino-acid polypeptide reads, in one-letter code: Glycine--tRNA ligase beta subunit (689 aa).

The protein belongs to the class-II aminoacyl-tRNA synthetase family. As to quaternary structure, tetramer of two alpha and two beta subunits.

The protein resides in the cytoplasm. The enzyme catalyses tRNA(Gly) + glycine + ATP = glycyl-tRNA(Gly) + AMP + diphosphate. This Acinetobacter baumannii (strain ACICU) protein is Glycine--tRNA ligase beta subunit.